The sequence spans 341 residues: tRNA N6-adenosine threonylcarbamoyltransferase (341 aa).

2 residues coordinate Fe cation: histidine 114 and histidine 118. Residues leucine 136–glycine 140, aspartate 169, glycine 182, aspartate 186, and asparagine 278 contribute to the substrate site. Aspartate 304 is a binding site for Fe cation.

This sequence belongs to the KAE1 / TsaD family. It depends on Fe(2+) as a cofactor.

Its subcellular location is the cytoplasm. The catalysed reaction is L-threonylcarbamoyladenylate + adenosine(37) in tRNA = N(6)-L-threonylcarbamoyladenosine(37) in tRNA + AMP + H(+). In terms of biological role, required for the formation of a threonylcarbamoyl group on adenosine at position 37 (t(6)A37) in tRNAs that read codons beginning with adenine. Is involved in the transfer of the threonylcarbamoyl moiety of threonylcarbamoyl-AMP (TC-AMP) to the N6 group of A37, together with TsaE and TsaB. TsaD likely plays a direct catalytic role in this reaction. This is tRNA N6-adenosine threonylcarbamoyltransferase from Lactococcus lactis subsp. cremoris (strain MG1363).